Here is a 47-residue protein sequence, read N- to C-terminus: PhoP/PhoQ regulator MgrB (47 aa).

A helical membrane pass occupies residues 6–26; that stretch reads WVALVVVVLACLLLWAQVFNM.

It belongs to the MgrB family. In terms of assembly, may form homooligomers. Probably interacts with the periplasmic domain of PhoQ.

Its subcellular location is the cell inner membrane. Its function is as follows. PhoP-regulated transcription is redox-sensitive, being activated when the periplasm becomes more reducing. MgrB acts between DsbA/DsbB and PhoP/PhoQ in this pathway. Represses PhoP/PhoQ signaling, possibly by binding to the periplasmic domain of PhoQ, altering its activity and that of downstream effector PhoP. The chain is PhoP/PhoQ regulator MgrB from Escherichia coli O127:H6 (strain E2348/69 / EPEC).